The following is a 143-amino-acid chain: MLERTLSILKPDVVKRNIAGQVNSYIENSGLKIIIQKMCLLTRYQAEKFYEIHKSQVFFVPLINFMISGPVVVQVLEGENAISLYREIMGATDPKKANSGTIRGDFAENIDANCVHGSDSLENAIREIRFFFSEYELLSLYEC.

Lys-10, Phe-58, Arg-86, Thr-92, Arg-103, and Asn-113 together coordinate ATP. Catalysis depends on His-116, which acts as the Pros-phosphohistidine intermediate.

The protein belongs to the NDK family. As to quaternary structure, homotetramer. Requires Mg(2+) as cofactor.

Its subcellular location is the cytoplasm. The catalysed reaction is a 2'-deoxyribonucleoside 5'-diphosphate + ATP = a 2'-deoxyribonucleoside 5'-triphosphate + ADP. The enzyme catalyses a ribonucleoside 5'-diphosphate + ATP = a ribonucleoside 5'-triphosphate + ADP. Functionally, major role in the synthesis of nucleoside triphosphates other than ATP. The ATP gamma phosphate is transferred to the NDP beta phosphate via a ping-pong mechanism, using a phosphorylated active-site intermediate. This is Nucleoside diphosphate kinase from Ehrlichia ruminantium (strain Welgevonden).